We begin with the raw amino-acid sequence, 507 residues long: Archaeal-type glutamate synthase [NADPH] (507 aa).

2 consecutive 4Fe-4S ferredoxin-type domains span residues 10–39 (FVVERDDYKCIRCLACVRVCSYGANYYDEN) and 41–70 (NRVYTENYKCVGCHFCEAICPTEAITVRRN). 8 residues coordinate [4Fe-4S] cluster: Cys-19, Cys-22, Cys-25, Cys-29, Cys-50, Cys-53, Cys-56, and Cys-60.

Belongs to the glutamate synthase family. FMN is required as a cofactor.

The enzyme catalyses 2 L-glutamate + NADP(+) = L-glutamine + 2-oxoglutarate + NADPH + H(+). In Thermotoga neapolitana (strain ATCC 49049 / DSM 4359 / NBRC 107923 / NS-E), this protein is Archaeal-type glutamate synthase [NADPH].